A 590-amino-acid chain; its full sequence is Major surface protein MspTL (590 aa).

The N-terminal stretch at 1 to 19 (MKKILAFFLVFALAGAVFA) is a signal peptide.

It is found in the cell outer membrane. Functionally, major component of the outer membrane. This chain is Major surface protein MspTL (mspTL), found in Treponema lecithinolyticum.